The following is a 285-amino-acid chain: Shikimate dehydrogenase (NADP(+)) (285 aa).

Shikimate is bound by residues 22–24 (SRS) and Thr-71. Catalysis depends on Lys-75, which acts as the Proton acceptor. The shikimate site is built by Asn-96 and Asp-111. NADP(+) is bound by residues 136–140 (GAGGA), 160–165 (NRTVGR), and Ile-225. Tyr-227 lines the shikimate pocket. Gly-248 contributes to the NADP(+) binding site.

Belongs to the shikimate dehydrogenase family. In terms of assembly, homodimer.

The catalysed reaction is shikimate + NADP(+) = 3-dehydroshikimate + NADPH + H(+). It functions in the pathway metabolic intermediate biosynthesis; chorismate biosynthesis; chorismate from D-erythrose 4-phosphate and phosphoenolpyruvate: step 4/7. In terms of biological role, involved in the biosynthesis of the chorismate, which leads to the biosynthesis of aromatic amino acids. Catalyzes the reversible NADPH linked reduction of 3-dehydroshikimate (DHSA) to yield shikimate (SA). The protein is Shikimate dehydrogenase (NADP(+)) of Rhizobium etli (strain CIAT 652).